The chain runs to 438 residues: Gamma-glutamyl phosphate reductase (438 aa).

The protein belongs to the gamma-glutamyl phosphate reductase family.

The protein localises to the cytoplasm. The catalysed reaction is L-glutamate 5-semialdehyde + phosphate + NADP(+) = L-glutamyl 5-phosphate + NADPH + H(+). The protein operates within amino-acid biosynthesis; L-proline biosynthesis; L-glutamate 5-semialdehyde from L-glutamate: step 2/2. Functionally, catalyzes the NADPH-dependent reduction of L-glutamate 5-phosphate into L-glutamate 5-semialdehyde and phosphate. The product spontaneously undergoes cyclization to form 1-pyrroline-5-carboxylate. The polypeptide is Gamma-glutamyl phosphate reductase (Prochlorococcus marinus (strain MIT 9313)).